The sequence spans 99 residues: Large ribosomal subunit protein bL27 (99 aa).

The propeptide occupies 1–9 (MLIMNLQLF).

Belongs to the bacterial ribosomal protein bL27 family. The N-terminus is cleaved by ribosomal processing cysteine protease Prp.

The sequence is that of Large ribosomal subunit protein bL27 from Clostridium botulinum (strain Eklund 17B / Type B).